The following is a 618-amino-acid chain: Chaperone protein DnaK (618 aa).

Phosphothreonine; by autocatalysis is present on Thr175. Residues 579–618 (GAPGAEGFDSNMAGEANAGQNANNDDNVVDADYKVEDDEK) are disordered. A compositionally biased stretch (low complexity) spans 591-604 (AGEANAGQNANNDD).

The protein belongs to the heat shock protein 70 family.

In terms of biological role, acts as a chaperone. This Clostridium tetani (strain Massachusetts / E88) protein is Chaperone protein DnaK.